Consider the following 402-residue polypeptide: Deoxyguanosinetriphosphate triphosphohydrolase-like protein 2 (402 aa).

One can recognise an HD domain in the interval 72-215 (RLTHSLEVAQ…MDLADEIAYA (144 aa)).

This sequence belongs to the dGTPase family. Type 2 subfamily.

This chain is Deoxyguanosinetriphosphate triphosphohydrolase-like protein 2, found in Vibrio cholerae serotype O1 (strain ATCC 39315 / El Tor Inaba N16961).